A 766-amino-acid polypeptide reads, in one-letter code: Alpha-onocerin synthase LCD (766 aa).

PFTB repeat units lie at residues 101-143 (LCRA…GALD), 151-192 (QREI…RLMG), 456-507 (QESY…STTD), 517-558 (IHEC…PGYK), 594-634 (IQEG…LASG), 643-684 (IQRA…HVVH), and 705-752 (LHRA…WALG). Catalysis depends on Asp488, which acts as the Proton donor.

Belongs to the terpene cyclase/mutase family.

The enzyme catalyses pre-alpha-onocerin = alpha-onocerin. Its pathway is secondary metabolite biosynthesis; terpenoid biosynthesis. Oxidosqualene cyclase involved in the biosynthesis of alpha-onocerin, a triterpenoid characterized by a symmetrical structure due to cyclizations at both termini of dioxidosqualene that inhibits acetylcholinesterase. Catalyzes the second half of the cyclization, exclusively from pre-alpha-onocerin. The chain is Alpha-onocerin synthase LCD from Lycopodium clavatum (Stag's-horn clubmoss).